The chain runs to 475 residues: Lactate utilization protein B (475 aa).

2 4Fe-4S ferredoxin-type domains span residues 304–334 (GTEFQAALHCIRCAACINVCPVYRHVGGHSY) and 353–382 (YEDHKELPYASSLCAACTDACPVKIPLHEL). [4Fe-4S] cluster contacts are provided by Cys313, Cys316, Cys319, Cys323, Cys366, Cys369, and Cys373.

This sequence belongs to the LutB/YkgF family.

Is involved in L-lactate degradation and allows cells to grow with lactate as the sole carbon source. Has probably a role as an electron transporter during oxidation of L-lactate. The sequence is that of Lactate utilization protein B from Shouchella clausii (strain KSM-K16) (Alkalihalobacillus clausii).